The primary structure comprises 594 residues: Probable acyl-CoA dehydrogenase (594 aa).

The Proton acceptor role is filled by Glu-405.

It belongs to the acyl-CoA dehydrogenase family. Requires FAD as cofactor.

It catalyses the reaction a 2,3-saturated acyl-CoA + A = a 2,3-dehydroacyl-CoA + AH2. It participates in lipid metabolism; fatty acid beta-oxidation. Involved in the degradation of long-chain fatty acids. In Bacillus subtilis (strain 168), this protein is Probable acyl-CoA dehydrogenase (fadE).